Here is a 191-residue protein sequence, read N- to C-terminus: Protein YceI (191 aa).

Positions 1-22 are cleaved as a signal peptide; the sequence is MKKSLLGLTFASLMFSAGSAVA.

The protein belongs to the UPF0312 family. Type 1 subfamily.

It localises to the periplasm. The sequence is that of Protein YceI from Shigella boydii serotype 4 (strain Sb227).